Consider the following 395-residue polypeptide: 8-amino-7-oxononanoate synthase (395 aa).

Arg-24 is a binding site for substrate. Residue 111 to 112 participates in pyridoxal 5'-phosphate binding; it reads GF. His-136 is a binding site for substrate. Residues Ser-184, 209 to 212, and 240 to 243 contribute to the pyridoxal 5'-phosphate site; these read DDAH and TLSK. Lys-243 carries the N6-(pyridoxal phosphate)lysine modification. Residue Thr-357 coordinates substrate.

This sequence belongs to the class-II pyridoxal-phosphate-dependent aminotransferase family. BioF subfamily. In terms of assembly, homodimer. Requires pyridoxal 5'-phosphate as cofactor.

The catalysed reaction is 6-carboxyhexanoyl-[ACP] + L-alanine + H(+) = (8S)-8-amino-7-oxononanoate + holo-[ACP] + CO2. It functions in the pathway cofactor biosynthesis; biotin biosynthesis. Its function is as follows. Catalyzes the decarboxylative condensation of pimeloyl-[acyl-carrier protein] and L-alanine to produce 8-amino-7-oxononanoate (AON), [acyl-carrier protein], and carbon dioxide. The polypeptide is 8-amino-7-oxononanoate synthase (Alkaliphilus metalliredigens (strain QYMF)).